The sequence spans 841 residues: DNA mismatch repair protein MutS (841 aa).

Residue 596 to 603 coordinates ATP; that stretch reads GPNMSGKS.

Belongs to the DNA mismatch repair MutS family.

Functionally, this protein is involved in the repair of mismatches in DNA. It is possible that it carries out the mismatch recognition step. This protein has a weak ATPase activity. The chain is DNA mismatch repair protein MutS from Acholeplasma laidlawii (strain PG-8A).